The primary structure comprises 365 residues: MAGDMQGVRVVEKYSPVIVMVMSNVAMGSVNALVKKALDVGVNHMVIGAYRMAISALILVPFAYVLERKTRPQITFRLMVDHFVSGLLGASLMQFFFLLGLSYTSATVSCALVSMLPAITFALALIFRTENVKILKTKAGMLKVIGTLICISGALFLTFYKGPQISNSHSHSHGGASHNNNDQDKANNWLLGCLYLTIGTVLLSLWMLFQGTLSIKYPCKYSSTCLMSIFAAFQCALLSLYKSRDVNDWIIDDRFVITVIIYAGVVGQAMTTVATTWGIKKLGAVFASAFFPLTLISATLFDFLILHTPLYLGSVIGSLVTITGLYMFLWGKNKETESSTALSSGMDNEAQYTTPNKDNDSKSPV.

The next 10 membrane-spanning stretches (helical) occupy residues 14-34 (YSPVIVMVMSNVAMGSVNALV), 46-66 (VIGAYRMAISALILVPFAYVL), 83-103 (FVSGLLGASLMQFFFLLGLSY), 107-127 (TVSCALVSMLPAITFALALIF), 139-159 (AGMLKVIGTLICISGALFLTF), 189-209 (WLLGCLYLTIGTVLLSLWMLF), 221-241 (YSSTCLMSIFAAFQCALLSLY), 255-275 (FVITVIIYAGVVGQAMTTVAT), 285-305 (VFASAFFPLTLISATLFDFLI), and 310-330 (LYLGSVIGSLVTITGLYMFLW). An EamA 1 domain is found at 27–157 (MGSVNALVKK…LICISGALFL (131 aa)). The region spanning 223–329 (STCLMSIFAA…VTITGLYMFL (107 aa)) is the EamA 2 domain. Positions 340 to 356 (TALSSGMDNEAQYTTPN) are enriched in polar residues. The interval 340-365 (TALSSGMDNEAQYTTPNKDNDSKSPV) is disordered.

It belongs to the drug/metabolite transporter (DMT) superfamily. Plant drug/metabolite exporter (P-DME) (TC 2.A.7.4) family.

Its subcellular location is the membrane. This Arabidopsis thaliana (Mouse-ear cress) protein is WAT1-related protein At1g01070.